A 375-amino-acid polypeptide reads, in one-letter code: Serpentine receptor class alpha-39 (375 aa).

7 helical membrane-spanning segments follow: residues 17-37 (LFAI…LFII), 51-71 (LVFL…LTAW), 99-119 (IRGT…GILL), 138-158 (LGTI…FILL), 183-203 (VYVM…VHLV), 236-256 (TPLL…VSVF), and 275-295 (LFIM…ELWL).

The protein belongs to the nematode receptor-like protein sra family.

It localises to the membrane. The sequence is that of Serpentine receptor class alpha-39 (sra-39) from Caenorhabditis elegans.